The chain runs to 243 residues: MIQLQKPKLILENGLRTDGRKLDELRPIKIELGVLKNADGSAIFEMGNTKVIAAVYGPKEMHPRHLALPDKASLRVRYHMTPFSTDERKNPAPSRREIELSKVIREALESTILLNLFPRTVIDIFMEVLQADAGTRLVALMAASMALADAGIPMRDLIAGVAVGKADGSLVLDLNEQEDMWGEADMPIAVLPSLGQVVLLQLNGFMTPDEFRRAFELAQKGISSIYALQKEALKNKYLEYKEE.

It belongs to the RNase PH family. Rrp41 subfamily. Component of the archaeal exosome complex. Forms a hexameric ring-like arrangement composed of 3 Rrp41-Rrp42 heterodimers. The hexameric ring associates with a trimer of Rrp4 and/or Csl4 subunits.

Its subcellular location is the cytoplasm. Functionally, catalytic component of the exosome, which is a complex involved in RNA degradation. Has 3'-&gt;5' exoribonuclease activity. Can also synthesize heteromeric RNA-tails. The chain is Exosome complex component Rrp41 from Sulfolobus acidocaldarius (strain ATCC 33909 / DSM 639 / JCM 8929 / NBRC 15157 / NCIMB 11770).